The chain runs to 155 residues: Putative pre-16S rRNA nuclease (155 aa).

The protein belongs to the YqgF nuclease family.

It is found in the cytoplasm. Its function is as follows. Could be a nuclease involved in processing of the 5'-end of pre-16S rRNA. The polypeptide is Putative pre-16S rRNA nuclease (Wolbachia sp. subsp. Drosophila simulans (strain wRi)).